Here is a 502-residue protein sequence, read N- to C-terminus: MQVLPQTRVQGVPSGRNLSCSKAVGGTPLRALTRDVVRPARSVNVHVVADGESADDVLLRSSSVAVAEKPKVSGRAFRRSLKDTGRYVAKPINDKDSLDLMEEHGVGYSSVGLVAQMRANNNEWRFKDIRVKLASAYGYCWGVERAVQMAYEAKKKYPDRQIHLTNEIIHNPTVNERMTEMDINIIEQKENGSKDFSKVSRQDVVILPAFGASVQELSLLKDLEVQIVDTTCPWVSKVWTAVDNQARKAHTSVIHGKYSHEETIATASFAETYLIVRDIEEANYVCNYILNGGNKEEFLTKFKNAISKGFDPDRDLARVGLANQTTMLRDETMAIGKLLEKTMIQKHGPAAIKEHFMVMDTICDATQERQDAVYQLVGQQDNPAEKLDLILVVGGFNSSNTSHLQEIPELKNIPSFWVNEAACIDPVNKKITHRTAHGTMLDTQNWLPDGPVTIGVTSGASTPDRAVEEVLEAVFKTRDASFGGIAPNYDLGTAPVVRHEEH.

The transit peptide at 1–48 directs the protein to the chloroplast; it reads MQVLPQTRVQGVPSGRNLSCSKAVGGTPLRALTRDVVRPARSVNVHVV. Cysteine 140 lines the [4Fe-4S] cluster pocket. Residue histidine 170 coordinates (2E)-4-hydroxy-3-methylbut-2-enyl diphosphate. Cysteine 232 is a binding site for [4Fe-4S] cluster. Residue histidine 260 participates in (2E)-4-hydroxy-3-methylbut-2-enyl diphosphate binding. The Proton donor role is filled by glutamate 262. Threonine 325 is a binding site for (2E)-4-hydroxy-3-methylbut-2-enyl diphosphate. [4Fe-4S] cluster is bound at residue cysteine 363. (2E)-4-hydroxy-3-methylbut-2-enyl diphosphate-binding positions include 398–400 and serine 461; that span reads SSN.

The protein belongs to the IspH family. Homodimer. Requires [4Fe-4S] cluster as cofactor.

It is found in the plastid. Its subcellular location is the chloroplast stroma. It catalyses the reaction dimethylallyl diphosphate + 2 oxidized [2Fe-2S]-[ferredoxin] + H2O = (2E)-4-hydroxy-3-methylbut-2-enyl diphosphate + 2 reduced [2Fe-2S]-[ferredoxin] + 2 H(+). The catalysed reaction is isopentenyl diphosphate + 2 oxidized [2Fe-2S]-[ferredoxin] + H2O = (2E)-4-hydroxy-3-methylbut-2-enyl diphosphate + 2 reduced [2Fe-2S]-[ferredoxin] + 2 H(+). It participates in isoprenoid biosynthesis; dimethylallyl diphosphate biosynthesis; dimethylallyl diphosphate from (2E)-4-hydroxy-3-methylbutenyl diphosphate: step 1/1. The protein operates within isoprenoid biosynthesis; isopentenyl diphosphate biosynthesis via DXP pathway; isopentenyl diphosphate from 1-deoxy-D-xylulose 5-phosphate: step 6/6. Functionally, enzyme of the plastid non-mevalonate pathway for isoprenoid biosynthesis that converts 1-hydroxy-2-methyl-2-(E)-butenyl 4-diphosphate into isopentenyl diphosphate (IPP) and dimethylallyl diphosphate (DMAPP). This chain is 4-hydroxy-3-methylbut-2-enyl diphosphate reductase, chloroplastic, found in Botryococcus braunii (Green alga).